The primary structure comprises 349 residues: Small ribosomal subunit biogenesis GTPase RsgA (349 aa).

The disordered stretch occupies residues 1 to 38 (MSKNKLSKGQERRVQANHQRRLKRTDNKPELDDSQLGE). The region spanning 102–272 (TSVLNRPDIY…VIDSPGVREF (171 aa)) is the CP-type G domain. GTP contacts are provided by residues 158–161 (NKID) and 212–220 (GQSGVGKSS). Zn(2+) contacts are provided by Cys-296, Cys-301, His-303, and Cys-309.

It belongs to the TRAFAC class YlqF/YawG GTPase family. RsgA subfamily. As to quaternary structure, monomer. Associates with 30S ribosomal subunit, binds 16S rRNA. Requires Zn(2+) as cofactor.

It localises to the cytoplasm. In terms of biological role, one of several proteins that assist in the late maturation steps of the functional core of the 30S ribosomal subunit. Helps release RbfA from mature subunits. May play a role in the assembly of ribosomal proteins into the subunit. Circularly permuted GTPase that catalyzes slow GTP hydrolysis, GTPase activity is stimulated by the 30S ribosomal subunit. The polypeptide is Small ribosomal subunit biogenesis GTPase RsgA (Serratia proteamaculans (strain 568)).